The chain runs to 306 residues: Ornithine carbamoyltransferase (306 aa).

Carbamoyl phosphate is bound by residues serine 51–threonine 54, glutamine 78, arginine 102, and histidine 129–glutamine 132. L-ornithine is bound by residues asparagine 159, aspartate 223, and serine 227 to methionine 228. Residues cysteine 263 to leucine 264 and arginine 291 each bind carbamoyl phosphate.

The protein belongs to the aspartate/ornithine carbamoyltransferase superfamily. OTCase family.

Its subcellular location is the cytoplasm. It catalyses the reaction carbamoyl phosphate + L-ornithine = L-citrulline + phosphate + H(+). It functions in the pathway amino-acid biosynthesis; L-arginine biosynthesis; L-arginine from L-ornithine and carbamoyl phosphate: step 1/3. Its function is as follows. Reversibly catalyzes the transfer of the carbamoyl group from carbamoyl phosphate (CP) to the N(epsilon) atom of ornithine (ORN) to produce L-citrulline. The chain is Ornithine carbamoyltransferase from Sulfurovum sp. (strain NBC37-1).